The primary structure comprises 155 residues: Cyclic pyranopterin monophosphate synthase (155 aa).

Substrate contacts are provided by residues 75-77 (LCH) and 111-112 (ME). Residue Asp-126 is part of the active site.

Belongs to the MoaC family. In terms of assembly, homohexamer; trimer of dimers.

It catalyses the reaction (8S)-3',8-cyclo-7,8-dihydroguanosine 5'-triphosphate = cyclic pyranopterin phosphate + diphosphate. The protein operates within cofactor biosynthesis; molybdopterin biosynthesis. In terms of biological role, catalyzes the conversion of (8S)-3',8-cyclo-7,8-dihydroguanosine 5'-triphosphate to cyclic pyranopterin monophosphate (cPMP). In Corynebacterium efficiens (strain DSM 44549 / YS-314 / AJ 12310 / JCM 11189 / NBRC 100395), this protein is Cyclic pyranopterin monophosphate synthase.